Reading from the N-terminus, the 193-residue chain is Ion-translocating oxidoreductase complex subunit A (193 aa).

6 consecutive transmembrane segments (helical) span residues 4–24, 39–59, 72–92, 102–122, 134–154, and 171–191; these read LLLI…RFLG, LGMG…TWVL, LQTI…EMIV, SLGI…LAVL, LVFA…FAGL, and PIEL…AGLV.

It belongs to the NqrDE/RnfAE family. As to quaternary structure, the complex is composed of six subunits: RnfA, RnfB, RnfC, RnfD, RnfE and RnfG.

Its subcellular location is the cell inner membrane. In terms of biological role, part of a membrane-bound complex that couples electron transfer with translocation of ions across the membrane. The polypeptide is Ion-translocating oxidoreductase complex subunit A (Syntrophotalea carbinolica (strain DSM 2380 / NBRC 103641 / GraBd1) (Pelobacter carbinolicus)).